The chain runs to 340 residues: Myomesin-1 (340 aa).

The interval 177–212 (AEKARLKSRPSAPXTGQIIVTEEEPSEEAGTENXQR) is disordered. Residues 197-206 (TEEEPSEEAG) are compositionally biased toward acidic residues.

As to quaternary structure, homodimer. Interacts with TTN/titin and PNKD. As to expression, seems to be expressed in all cardiac and skeletal fibers.

It localises to the cytoplasm. It is found in the myofibril. Its subcellular location is the sarcomere. The protein localises to the m line. In terms of biological role, major component of the vertebrate myofibrillar M band. Binds myosin, titin, and light meromyosin. This binding is dose dependent. The chain is Myomesin-1 (MYOM1) from Bos taurus (Bovine).